Consider the following 173-residue polypeptide: Disulfide bond formation protein B (173 aa).

Residues 1-11 (MNALQWSFRAQ) are Cytoplasmic-facing. A helical transmembrane segment spans residues 12–28 (CLTGFLFCTGLLAYAIF). Topologically, residues 29 to 46 (LQLHQGLEPCPLCIFQRI) are periplasmic. An intrachain disulfide couples C38 to C41. A helical membrane pass occupies residues 47–63 (AFAVLGILFLIAGLYNS). Over 64 to 70 (SNVYTRK) the chain is Cytoplasmic. A helical transmembrane segment spans residues 71-88 (AYGLLIFLTAIIGTGIAG). The Periplasmic portion of the chain corresponds to 89–145 (RHVWVQLMPHNTISSCGSPLSFLSETMGPFEVFRTVLTGTSNCGNIDWRFLGLSMPM). A disulfide bridge connects residues C104 and C131. The chain crosses the membrane as a helical span at residues 146 to 164 (WSMFWFVALALLGLLVGFK). Topologically, residues 165–173 (AERRKPLFS) are cytoplasmic.

The protein belongs to the DsbB family.

Its subcellular location is the cell inner membrane. Required for disulfide bond formation in some periplasmic proteins. Acts by oxidizing the DsbA protein. In Xylella fastidiosa (strain Temecula1 / ATCC 700964), this protein is Disulfide bond formation protein B.